The chain runs to 372 residues: NAD(P)H-quinone oxidoreductase subunit 1 (372 aa).

9 helical membrane-spanning segments follow: residues 27 to 47, 65 to 85, 97 to 117, 128 to 148, 176 to 196, 204 to 224, 254 to 274, 308 to 328, and 347 to 367; these read LLWL…GVLV, PEYI…KLIF, WLFT…YIIV, LAMG…GLLM, LALA…VEIV, ILSW…IAAL, FALF…LVSV, VLGI…AILL, and FLLP…LAFP.

It belongs to the complex I subunit 1 family. In terms of assembly, NDH-1 is composed of at least 11 different subunits.

It is found in the cellular thylakoid membrane. The catalysed reaction is a plastoquinone + NADH + (n+1) H(+)(in) = a plastoquinol + NAD(+) + n H(+)(out). It catalyses the reaction a plastoquinone + NADPH + (n+1) H(+)(in) = a plastoquinol + NADP(+) + n H(+)(out). In terms of biological role, NDH-1 shuttles electrons from an unknown electron donor, via FMN and iron-sulfur (Fe-S) centers, to quinones in the respiratory and/or the photosynthetic chain. The immediate electron acceptor for the enzyme in this species is believed to be plastoquinone. Couples the redox reaction to proton translocation, and thus conserves the redox energy in a proton gradient. This Thermosynechococcus vestitus (strain NIES-2133 / IAM M-273 / BP-1) protein is NAD(P)H-quinone oxidoreductase subunit 1.